The primary structure comprises 262 residues: Small ribosomal subunit protein eS4 (262 aa).

Positions 42–105 (LPLIIMLRNR…GEFFRLLYDV (64 aa)) constitute an S4 RNA-binding domain.

The protein belongs to the eukaryotic ribosomal protein eS4 family.

The protein is Small ribosomal subunit protein eS4 (RpS4) of Ixodes scapularis (Black-legged tick).